The following is a 470-amino-acid chain: Poly(A) polymerase catalytic subunit (470 aa).

Residues aspartate 192 and aspartate 194 contribute to the active site.

The protein belongs to the poxviridae poly(A) polymerase catalytic subunit family. Heterodimer of a large (catalytic) subunit and a small (regulatory) subunit.

The catalysed reaction is RNA(n) + ATP = RNA(n)-3'-adenine ribonucleotide + diphosphate. Functionally, polymerase that creates the 3'-poly(A) tail of mRNA's. This is Poly(A) polymerase catalytic subunit (PAPL) from Sus scrofa (Pig).